A 425-amino-acid chain; its full sequence is Gamma-glutamyl phosphate reductase (425 aa).

The protein belongs to the gamma-glutamyl phosphate reductase family.

Its subcellular location is the cytoplasm. The enzyme catalyses L-glutamate 5-semialdehyde + phosphate + NADP(+) = L-glutamyl 5-phosphate + NADPH + H(+). It participates in amino-acid biosynthesis; L-proline biosynthesis; L-glutamate 5-semialdehyde from L-glutamate: step 2/2. Functionally, catalyzes the NADPH-dependent reduction of L-glutamate 5-phosphate into L-glutamate 5-semialdehyde and phosphate. The product spontaneously undergoes cyclization to form 1-pyrroline-5-carboxylate. This Opitutus terrae (strain DSM 11246 / JCM 15787 / PB90-1) protein is Gamma-glutamyl phosphate reductase.